Consider the following 533-residue polypeptide: 2,3-bisphosphoglycerate-independent phosphoglycerate mutase (533 aa).

The Mn(2+) site is built by aspartate 15 and serine 65. Serine 65 acts as the Phosphoserine intermediate in catalysis. Residues histidine 126, 156 to 157 (RD), arginine 188, arginine 194, 258 to 261 (RPDR), and lysine 331 each bind substrate. Residues aspartate 398, histidine 402, aspartate 439, histidine 440, and histidine 457 each coordinate Mn(2+).

This sequence belongs to the BPG-independent phosphoglycerate mutase family. As to quaternary structure, monomer. The cofactor is Mn(2+).

It carries out the reaction (2R)-2-phosphoglycerate = (2R)-3-phosphoglycerate. Its pathway is carbohydrate degradation; glycolysis; pyruvate from D-glyceraldehyde 3-phosphate: step 3/5. In terms of biological role, catalyzes the interconversion of 2-phosphoglycerate and 3-phosphoglycerate. The chain is 2,3-bisphosphoglycerate-independent phosphoglycerate mutase from Trichormus variabilis (strain ATCC 29413 / PCC 7937) (Anabaena variabilis).